Reading from the N-terminus, the 386-residue chain is Succinate--CoA ligase [ADP-forming] subunit beta (386 aa).

Positions 9 to 244 constitute an ATP-grasp domain; sequence KAVLRSYGVS…LDEEDAKEIE (236 aa). ATP contacts are provided by residues Lys-46, 53 to 55, Glu-99, Cys-102, and Glu-107; that span reads GRG. Mg(2+)-binding residues include Asn-199 and Asp-213. Substrate is bound by residues Asn-264 and 321–323; that span reads GIM.

It belongs to the succinate/malate CoA ligase beta subunit family. Heterotetramer of two alpha and two beta subunits. Requires Mg(2+) as cofactor.

The enzyme catalyses succinate + ATP + CoA = succinyl-CoA + ADP + phosphate. The catalysed reaction is GTP + succinate + CoA = succinyl-CoA + GDP + phosphate. It participates in carbohydrate metabolism; tricarboxylic acid cycle; succinate from succinyl-CoA (ligase route): step 1/1. Its function is as follows. Succinyl-CoA synthetase functions in the citric acid cycle (TCA), coupling the hydrolysis of succinyl-CoA to the synthesis of either ATP or GTP and thus represents the only step of substrate-level phosphorylation in the TCA. The beta subunit provides nucleotide specificity of the enzyme and binds the substrate succinate, while the binding sites for coenzyme A and phosphate are found in the alpha subunit. This chain is Succinate--CoA ligase [ADP-forming] subunit beta, found in Bacillus anthracis (strain A0248).